Consider the following 357-residue polypeptide: Queuosine-tRNA galactosyltransferase (357 aa).

The protein belongs to the glycosyltransferase 2 family.

It localises to the cytoplasm. It carries out the reaction queuosine(34) in tRNA(Tyr) + UDP-alpha-D-galactose = O-5''-beta-D-galactosylqueuosine(34) in tRNA(Tyr) + UDP + H(+). Glycosyltransferase that specifically catalyzes galactosylation of cytoplasmic tRNA(Tyr) modified with queuosine at position 34 (queuosine(34)). Galactosylates the cyclopentene hydroxyl group of queuosine(34) in tRNA(Tyr) to form galactosyl-queuosine(34). Mannosylation of queuosine(34) in tRNA(Tyr) is required to slow-down elongation at cognate codons UAC and suppress stop codon readthrough, thereby regulating protein translation. The sequence is that of Queuosine-tRNA galactosyltransferase from Rattus norvegicus (Rat).